An 84-amino-acid chain; its full sequence is SPbeta prophage-derived uncharacterized protein YomY (84 aa).

The sequence is that of SPbeta prophage-derived uncharacterized protein YomY (yomY) from Bacillus subtilis (strain 168).